The following is a 343-amino-acid chain: S-adenosylmethionine:tRNA ribosyltransferase-isomerase (343 aa).

The protein belongs to the QueA family. In terms of assembly, monomer.

The protein resides in the cytoplasm. The catalysed reaction is 7-aminomethyl-7-carbaguanosine(34) in tRNA + S-adenosyl-L-methionine = epoxyqueuosine(34) in tRNA + adenine + L-methionine + 2 H(+). It functions in the pathway tRNA modification; tRNA-queuosine biosynthesis. Functionally, transfers and isomerizes the ribose moiety from AdoMet to the 7-aminomethyl group of 7-deazaguanine (preQ1-tRNA) to give epoxyqueuosine (oQ-tRNA). This Enterococcus faecalis (strain ATCC 700802 / V583) protein is S-adenosylmethionine:tRNA ribosyltransferase-isomerase.